Reading from the N-terminus, the 160-residue chain is Transcription antitermination protein NusB (160 aa).

It belongs to the NusB family.

Involved in transcription antitermination. Required for transcription of ribosomal RNA (rRNA) genes. Binds specifically to the boxA antiterminator sequence of the ribosomal RNA (rrn) operons. The sequence is that of Transcription antitermination protein NusB from Rhizobium etli (strain ATCC 51251 / DSM 11541 / JCM 21823 / NBRC 15573 / CFN 42).